The following is a 198-amino-acid chain: IMP cyclohydrolase (198 aa).

This sequence belongs to the archaeal IMP cyclohydrolase family.

The catalysed reaction is IMP + H2O = 5-formamido-1-(5-phospho-D-ribosyl)imidazole-4-carboxamide. Its pathway is purine metabolism; IMP biosynthesis via de novo pathway; IMP from 5-formamido-1-(5-phospho-D-ribosyl)imidazole-4-carboxamide: step 1/1. Catalyzes the cyclization of 5-formylamidoimidazole-4-carboxamide ribonucleotide to IMP. This Thermococcus kodakarensis (strain ATCC BAA-918 / JCM 12380 / KOD1) (Pyrococcus kodakaraensis (strain KOD1)) protein is IMP cyclohydrolase.